The following is a 335-amino-acid chain: MPSTRPLPRPSSRSLRRLALGLGLAFGLGATAAAQTTMRINISTAQNSHQGVAIDTFAKEVEKRTGGRYKVQTFYNAALGAERESVEAVQLGTHELTFSSSGPIPNFVPETKILDVPFLFRDKAHARAVLDGPIGQELLTRFDGKGFKALAWAENGFRHMSNSKRAVKEPGDLKGLKMRTMENPVHIAAYKGFGIVTTPMAFSEVFTALQQGTVDGQENPLSVIISAKFDQVQKHLTLTGHVYSPALFLMNKALFDKLPAADQQAFIDAARQGAKLNRARVDEDDAKGVADLRAKGMTVIDNIDKARFVAALAPVNAQFEKQFGKAALEQIRSAQ.

Residues 1-34 (MPSTRPLPRPSSRSLRRLALGLGLAFGLGATAAA) form the signal peptide. (R)-pantoate contacts are provided by residues glutamine 50, glutamate 82, 155 to 158 (NGFR), arginine 179, and asparagine 219.

It belongs to the bacterial solute-binding protein 7 family. In terms of assembly, the complex is comprised of an extracytoplasmic solute-binding protein and a heteromeric permease formed by two transmembrane proteins.

The protein localises to the periplasm. Its function is as follows. Solute-binding protein that binds (R)-pantoate and D-erythronate (in vitro). Probably part of a tripartite ATP-independent periplasmic (TRAP) transport system that mediates solute transport into the cytoplasm. The protein is Solute-binding protein Veis_3954 of Verminephrobacter eiseniae (strain EF01-2).